Here is a 514-residue protein sequence, read N- to C-terminus: Nucleus accumbens-associated protein 1 (514 aa).

In terms of domain architecture, BTB spans 30-94 (CDVSVVVKGH…CYTGRLSMNM (65 aa)). K167 participates in a covalent cross-link: Glycyl lysine isopeptide (Lys-Gly) (interchain with G-Cter in SUMO1); alternate. Residue K167 forms a Glycyl lysine isopeptide (Lys-Gly) (interchain with G-Cter in SUMO2); alternate linkage. A Glycyl lysine isopeptide (Lys-Gly) (interchain with G-Cter in SUMO2) cross-link involves residue K182. Disordered stretches follow at residues 183–205 (RLWD…RKMA) and 242–279 (PSMS…EEGT). S187 carries the phosphoserine modification. A compositionally biased stretch (polar residues) spans 242–251 (PSMSERTSPG). A Phosphoserine; by PKC modification is found at S245. Residues 252-264 (TSSAYTSDSPSSY) show a composition bias toward low complexity. Positions 267 to 279 (EEDEEEDAGEEGT) are enriched in acidic residues. Glycyl lysine isopeptide (Lys-Gly) (interchain with G-Cter in SUMO2) cross-links involve residues K304, K438, K466, and K485. The 98-residue stretch at 360-457 (GTNVYITRAQ…DMCTNARRVV (98 aa)) folds into the BEN domain. A phosphoserine mark is found at S492 and S496.

Homooligomer; mediated by the BTB domain. Interacts with HDAC3 and HDAC4. Interacts (via BTB domain) with CUL3, PSMD7 and RCOR1. In terms of tissue distribution, ubiquitously expressed with higher expression in the brain, kidney and liver, and at lower levels in heart, lung and testes.

It is found in the nucleus. The protein localises to the cytoplasm. Functions as a transcriptional repressor. Seems to function as a transcriptional corepressor in neuronal cells through recruitment of HDAC3 and HDAC4. Contributes to tumor progression, and tumor cell proliferation and survival. This may be mediated at least in part through repressing transcriptional activity of GADD45GIP1. Required for recruiting the proteasome from the nucleus to the cytoplasm and dendritic spines. Involved in the acute behavioral and neurological responses to cocaine and amphetamines. The protein is Nucleus accumbens-associated protein 1 (Nacc1) of Mus musculus (Mouse).